The sequence spans 518 residues: MAINLNEYSLLIKDQIKKYANKIISDQKGYIITIGDGIVRVSGLDDVLLNELVEFENGAYGIALNLEPNSVGVVMLSDYYDLKEGSSVKRTGKVIQAPVGDGLLGRVIDPIGLPIDGKGELKNISGYAPIERLAYGVMQRKSVHQPLETGILAIDSMLPIGKGQRELIIGDRQTGKTTIALDTIINQKGKNVNCIYVAIGQKNSSVAQITRLLEETGAMAYTTIVSATASELAALSYIAPFAGVTIGEEWMRQGKDVLIVYDDLSKHAVAYRALSLLLRRPPGREAYPGDIFYLHSRLLERAGKLSDELGAGSITALPIIETQAGDISAYIPTNVISITDGQLFTTTSLFNSGQRPAIHVGLSVSRVGSAAQLKSIKQVSGSLKLELAQYRELDTFSQFSSDLDAETKIVLEHGARVMEMFKQPQAKPIDQTSEAVLLFGIKNRFIKWIPTDHIIKFKEFILDKIKQDQVYKKIEEKKAFDDEIEKELTAFFKDVVKKYTSTLVDYNGSLYGDLKELE.

170–177 provides a ligand contact to ATP; that stretch reads GDRQTGKT.

It belongs to the ATPase alpha/beta chains family. As to quaternary structure, F-type ATPases have 2 components, CF(1) - the catalytic core - and CF(0) - the membrane proton channel. CF(1) has five subunits: alpha(3), beta(3), gamma(1), delta(1), epsilon(1). CF(0) has three main subunits: a(1), b(2) and c(9-12). The alpha and beta chains form an alternating ring which encloses part of the gamma chain. CF(1) is attached to CF(0) by a central stalk formed by the gamma and epsilon chains, while a peripheral stalk is formed by the delta and b chains.

The protein localises to the cell membrane. The catalysed reaction is ATP + H2O + 4 H(+)(in) = ADP + phosphate + 5 H(+)(out). Produces ATP from ADP in the presence of a proton gradient across the membrane. The alpha chain is a regulatory subunit. This Mycoplasmoides gallisepticum (strain R(low / passage 15 / clone 2)) (Mycoplasma gallisepticum) protein is ATP synthase subunit alpha.